The sequence spans 864 residues: Leucine--tRNA ligase (864 aa).

Residues 42-52 carry the 'HIGH' region motif; sequence PYPSGKLHMGH. The short motif at 624 to 628 is the 'KMSKS' region element; it reads KMSKS. Residue Lys-627 coordinates ATP.

Belongs to the class-I aminoacyl-tRNA synthetase family.

The protein localises to the cytoplasm. It catalyses the reaction tRNA(Leu) + L-leucine + ATP = L-leucyl-tRNA(Leu) + AMP + diphosphate. This is Leucine--tRNA ligase from Burkholderia ambifaria (strain ATCC BAA-244 / DSM 16087 / CCUG 44356 / LMG 19182 / AMMD) (Burkholderia cepacia (strain AMMD)).